Here is a 228-residue protein sequence, read N- to C-terminus: HTH-type transcriptional regulator ArcR (228 aa).

22-141 (SYINIPVGVL…VKLFSLLSET (120 aa)) serves as a coordination point for a nucleoside 3',5'-cyclic phosphate. Residues 155-228 (KLAKERVTKI…SKNWLVSKDL (74 aa)) enclose the HTH crp-type domain. Positions 188-207 (IQLLSDMAGISRETTSHIIN) form a DNA-binding region, H-T-H motif.

Its subcellular location is the cytoplasm. In terms of biological role, positively regulates the expression of the arcABDCR operon under anaerobic conditions, thus playing an essential role in arginine catabolism. May also control the expression of genes encoding proteins which are involved in anaerobic metabolism. Can bind cyclic AMP. The polypeptide is HTH-type transcriptional regulator ArcR (arcR) (Staphylococcus epidermidis (strain ATCC 35984 / DSM 28319 / BCRC 17069 / CCUG 31568 / BM 3577 / RP62A)).